The sequence spans 362 residues: H-2 class I histocompatibility antigen, L-D alpha chain (362 aa).

The first 24 residues, 1-24, serve as a signal peptide directing secretion; that stretch reads MGAMAPRTLLLLLAAALAPTQTRA. Positions 25–114 are alpha-1; that stretch reads GPHSMRYFET…LLGYYNQSAG (90 aa). The Extracellular portion of the chain corresponds to 25–309; sequence GPHSMRYFET…PPPSTDSYMV (285 aa). Residue Asn-110 is glycosylated (N-linked (GlcNAc...) asparagine). An alpha-2 region spans residues 115-206; that stretch reads GTHTLQWMYG…KNGNATLLRT (92 aa). Cys-125 and Cys-188 are disulfide-bonded. 2 N-linked (GlcNAc...) asparagine glycosylation sites follow: Asn-200 and Asn-280. An alpha-3 region spans residues 207–298; it reads DSPKAHVTHH…GLPEPLTLRW (92 aa). Positions 209–297 constitute an Ig-like C1-type domain; it reads PKAHVTHHPR…EGLPEPLTLR (89 aa). The cysteines at positions 227 and 283 are disulfide-linked. The connecting peptide stretch occupies residues 299-309; that stretch reads EPPPSTDSYMV. Residues 310 to 331 form a helical membrane-spanning segment; the sequence is IVAVLGVLGAMAIIGAVVAFVM. Residues 332–362 lie on the Cytoplasmic side of the membrane; the sequence is KRRRNTGGKGGDYALAPGSQSSEMSLRDCKA. The tract at residues 340–362 is disordered; the sequence is KGGDYALAPGSQSSEMSLRDCKA. Phosphoserine is present on residues Ser-353 and Ser-356.

It belongs to the MHC class I family. Heterodimer of an alpha chain and a beta chain (beta-2-microglobulin).

It localises to the membrane. In terms of biological role, involved in the presentation of foreign antigens to the immune system. This Mus musculus (Mouse) protein is H-2 class I histocompatibility antigen, L-D alpha chain (H2-L).